Reading from the N-terminus, the 431-residue chain is Glutamate-1-semialdehyde 2,1-aminomutase (431 aa).

An N6-(pyridoxal phosphate)lysine modification is found at Lys-269.

The protein belongs to the class-III pyridoxal-phosphate-dependent aminotransferase family. HemL subfamily. As to quaternary structure, homodimer. Pyridoxal 5'-phosphate is required as a cofactor.

It localises to the cytoplasm. It carries out the reaction (S)-4-amino-5-oxopentanoate = 5-aminolevulinate. It participates in porphyrin-containing compound metabolism; protoporphyrin-IX biosynthesis; 5-aminolevulinate from L-glutamyl-tRNA(Glu): step 2/2. It functions in the pathway porphyrin-containing compound metabolism; chlorophyll biosynthesis. The polypeptide is Glutamate-1-semialdehyde 2,1-aminomutase (Pelodictyon phaeoclathratiforme (strain DSM 5477 / BU-1)).